The following is a 934-amino-acid chain: MSAHDLKLEEIVNAETLRRKLNELADTADESYTSLPMRKVVLQTLKDALASGRANAEDMLMKDGGGTLCAKRLCYLMDTLIDILFEFATTRAYPTRNPSKAENMALVAVGGYGRGGLAQGSDIDLLFLLPYKQTPWGEQVVEYTLYMLWDMGLKVGHSTRNIDECIRLAREDMTIRTALLDARFLTGDKDLFRTLEIRFEEEIVKGTEPEFIQAKLAERDARHRKAGETRYLVEPNVKEGKGGQRDLHTLFWITKYFYRVKTKEELVKLGVLSRAELKLFNKAEDFLWAVRCHMHFATLKAEERLSFDIQPEIAQRLGYTAHPGQNYVERFIKHYFLVAKDVGDLTRIICAALEEQQAKHVPGFNRIFLTFSRRKRKLSDDGAFISENHRINIARPDIFRQDPVNMIRLFHLADRHGLEFHPEAMQSLTRSLKLINADLRENPEANRLFLEILTSPRNPELILRRMNESGVLGKFIPDFGKIVAMMQFNMYHHYTVDEHLLRCIAVLSEIEHGELKTEHPLSNHLITTIKRDRNLLYVTLLLHDIAKGRPEDHSIAGARIARRLCPRFGLTPSETETVEWLVREHLTMSMVAQSRDLNDRKTIIDFADTVQTMERLKLLLILTVCDIKAVGPGIWNGWKGQLLRTLFYETELVLTGGFSELSRAARDKQAREALAERLSDWPKEERDAYLALPYTNYFLTVSLDDQVRHAHFIRDADQQGRALVTMAKPHAFEAVTEITVLAPDHPRLLSVITGACAAAGGNIVDAQIFTTSDGRALDTILISREFDTDDDERRQAERVGKVIEDVLSGKAHLPDMLAKRTKPKKAARAFKVEPRVEINNTLSNKFTVIEVEGLDRPGLLSELTGLISDLSLDIASAHITTFGEKVIDSFYVTDLVGHKISNATRQGNIKRKLLALLGAENGARTNGRSPQAAA.

Residues Met-1–Ser-379 form a uridylyltransferase region. Positions Asp-380–Thr-736 are uridylyl-removing. Positions Val-496 to Met-613 constitute an HD domain. ACT domains are found at residues Glu-737–Ala-818 and Val-848–Gln-931.

This sequence belongs to the GlnD family. It depends on Mg(2+) as a cofactor.

The enzyme catalyses [protein-PII]-L-tyrosine + UTP = [protein-PII]-uridylyl-L-tyrosine + diphosphate. The catalysed reaction is [protein-PII]-uridylyl-L-tyrosine + H2O = [protein-PII]-L-tyrosine + UMP + H(+). With respect to regulation, uridylyltransferase (UTase) activity is inhibited by glutamine, while glutamine activates uridylyl-removing (UR) activity. Modifies, by uridylylation and deuridylylation, the PII regulatory proteins (GlnB and homologs), in response to the nitrogen status of the cell that GlnD senses through the glutamine level. Under low glutamine levels, catalyzes the conversion of the PII proteins and UTP to PII-UMP and PPi, while under higher glutamine levels, GlnD hydrolyzes PII-UMP to PII and UMP (deuridylylation). Thus, controls uridylylation state and activity of the PII proteins, and plays an important role in the regulation of nitrogen assimilation and metabolism. The polypeptide is Bifunctional uridylyltransferase/uridylyl-removing enzyme (Brucella ovis (strain ATCC 25840 / 63/290 / NCTC 10512)).